A 539-amino-acid chain; its full sequence is GMP synthase [glutamine-hydrolyzing] (539 aa).

Residues 4–202 form the Glutamine amidotransferase type-1 domain; sequence KILILDFGSQ…VLGIAGCKPD (199 aa). Cysteine 81 acts as the Nucleophile in catalysis. Catalysis depends on residues histidine 176 and glutamate 178. Positions 203–395 constitute a GMPS ATP-PPase domain; sequence WVMRDHIEEA…LGLPPEMVYR (193 aa). 230–236 provides a ligand contact to ATP; it reads SGGVDSS.

Homodimer.

The catalysed reaction is XMP + L-glutamine + ATP + H2O = GMP + L-glutamate + AMP + diphosphate + 2 H(+). Its pathway is purine metabolism; GMP biosynthesis; GMP from XMP (L-Gln route): step 1/1. Catalyzes the synthesis of GMP from XMP. This chain is GMP synthase [glutamine-hydrolyzing], found in Cupriavidus necator (strain ATCC 17699 / DSM 428 / KCTC 22496 / NCIMB 10442 / H16 / Stanier 337) (Ralstonia eutropha).